Consider the following 545-residue polypeptide: Inosine-5'-monophosphate dehydrogenase (545 aa).

2 consecutive CBS domains span residues 138-194 and 201-258; these read MITD…DYDT and MTKE…PDAT. NAD(+) contacts are provided by residues aspartate 295 and 347 to 349; that span reads GIG. Residues glycine 349 and glycine 351 each coordinate K(+). An IMP-binding site is contributed by serine 352. Cysteine 354 lines the K(+) pocket. Residue cysteine 354 is the Thioimidate intermediate of the active site. IMP contacts are provided by residues 387 to 389, 410 to 411, and 434 to 438; these read DGG, GG, and YRGMG. Arginine 455 serves as the catalytic Proton acceptor. Glutamate 470 contributes to the IMP binding site. K(+)-binding residues include glutamate 524, serine 525, and histidine 526.

It belongs to the IMPDH/GMPR family. Homotetramer. It depends on K(+) as a cofactor.

The catalysed reaction is IMP + NAD(+) + H2O = XMP + NADH + H(+). Its pathway is purine metabolism; XMP biosynthesis via de novo pathway; XMP from IMP: step 1/1. Its activity is regulated as follows. Mycophenolic acid (MPA) is a non-competitive inhibitor that prevents formation of the closed enzyme conformation by binding to the same site as the amobile flap. In contrast, mizoribine monophosphate (MZP) is a competitive inhibitor that induces the closed conformation. MPA is a potent inhibitor of mammalian IMPDHs but a poor inhibitor of the bacterial enzymes. MZP is a more potent inhibitor of bacterial IMPDH. Its function is as follows. Catalyzes the conversion of inosine 5'-phosphate (IMP) to xanthosine 5'-phosphate (XMP), the first committed and rate-limiting step in the de novo synthesis of guanine nucleotides, and therefore plays an important role in the regulation of cell growth. The protein is Inosine-5'-monophosphate dehydrogenase of Bifidobacterium longum (strain NCC 2705).